The sequence spans 404 residues: Tyrosine--tRNA ligase (404 aa).

The short motif at P45 to H54 is the 'HIGH' region element. The 'KMSKS' region motif lies at K229–S233. ATP is bound at residue K232. The S4 RNA-binding domain maps to I342–F402.

It belongs to the class-I aminoacyl-tRNA synthetase family. TyrS type 2 subfamily. In terms of assembly, homodimer.

The protein localises to the cytoplasm. The enzyme catalyses tRNA(Tyr) + L-tyrosine + ATP = L-tyrosyl-tRNA(Tyr) + AMP + diphosphate + H(+). Its function is as follows. Catalyzes the attachment of tyrosine to tRNA(Tyr) in a two-step reaction: tyrosine is first activated by ATP to form Tyr-AMP and then transferred to the acceptor end of tRNA(Tyr). In Acinetobacter baylyi (strain ATCC 33305 / BD413 / ADP1), this protein is Tyrosine--tRNA ligase.